Reading from the N-terminus, the 374-residue chain is MPQTIVVKIGTSSLTDPKTGMLALATIGTLVETLTRLKQKGHRVILVSSGAVGVGCGVLKRSERPKKIAEKQAIAAVGQGRLIRLYDDLFTSLQQAIAQVLLTRRDLVDRTSYLTVQEALNAMLDLSVIPIVNENDTVAVDELKFGDNDTLSALVASLVNADWLVLLTDVDRLYSADPRQNPDARPIPLVSSSELFNLQVDAGSSGSQWGTGGMQTKLTAARIATSAGVRTVITQGKTPQNLLKIVAGEDIGTHFEAQPQADNARKRWIAYGLVPQGILTLDDGATQALLKNGRSLLAAGIVAVEGEFTINDPVELRTQTGQAIARGLVNYNHQDIEKIQGQHSTQIRQILGYGSADTVIHRDNLALLIAAEGI.

ATP is bound at residue Lys8. Ser49, Asp136, and Asn148 together coordinate substrate. Residues 168–169 (TD) and 211–217 (TGGMQTK) each bind ATP. One can recognise a PUA domain in the interval 276-354 (QGILTLDDGA…TQIRQILGYG (79 aa)).

The protein belongs to the glutamate 5-kinase family.

Its subcellular location is the cytoplasm. The catalysed reaction is L-glutamate + ATP = L-glutamyl 5-phosphate + ADP. Its pathway is amino-acid biosynthesis; L-proline biosynthesis; L-glutamate 5-semialdehyde from L-glutamate: step 1/2. Functionally, catalyzes the transfer of a phosphate group to glutamate to form L-glutamate 5-phosphate. The protein is Glutamate 5-kinase of Picosynechococcus sp. (strain ATCC 27264 / PCC 7002 / PR-6) (Agmenellum quadruplicatum).